Consider the following 285-residue polypeptide: Putative sugar uptake protein lmo0424 (285 aa).

A run of 9 helical transmembrane segments spans residues Ser-2 to Ala-21, Gln-31 to Leu-50, Thr-55 to Phe-77, Trp-111 to Met-133, Ser-146 to Thr-168, Phe-172 to Ile-194, Val-207 to Ala-229, Val-233 to Phe-255, and Leu-262 to Leu-284.

It belongs to the GRP transporter (TC 2.A.7.5) family.

It is found in the cell membrane. The polypeptide is Putative sugar uptake protein lmo0424 (Listeria monocytogenes serovar 1/2a (strain ATCC BAA-679 / EGD-e)).